Consider the following 567-residue polypeptide: Zinc finger protein 143 (567 aa).

C2H2-type zinc fingers lie at residues 230–254 (FRCD…ERSH), 260–284 (YQCD…VRTH), 290–314 (YRCS…VRTH), 320–344 (FKCP…IRTH), 350–374 (YYCS…VRIH), 380–404 (YVCT…HVVH), and 410–433 (YNCN…RTAH). Positions 506 to 520 (SATESGPQHSHNLGG) are enriched in polar residues. Residues 506-525 (SATESGPQHSHNLGGSESRP) are disordered.

This sequence belongs to the GLI C2H2-type zinc-finger protein family.

The protein resides in the nucleus. In terms of biological role, transcriptional activator. Activates the gene for selenocysteine tRNA (tRNAsec). Binds to the activator element (AE) motif of the selenocysteine tRNA gene promoter. This chain is Zinc finger protein 143 (znf143), found in Xenopus tropicalis (Western clawed frog).